The primary structure comprises 360 residues: Molybdenum import ATP-binding protein ModC (360 aa).

The 230-residue stretch at 5–234 (VKLHLGYQDF…LDLPLALGDD (230 aa)) folds into the ABC transporter domain. ATP is bound at residue 32–39 (GHSGSGKT). A Mop domain is found at 295–360 (HSSILNRLPV…AQIKAVAVLA (66 aa)).

This sequence belongs to the ABC transporter superfamily. Molybdate importer (TC 3.A.1.8) family. In terms of assembly, the complex is composed of two ATP-binding proteins (ModC), two transmembrane proteins (ModB) and a solute-binding protein (ModA).

The protein resides in the cell inner membrane. The catalysed reaction is molybdate(out) + ATP + H2O = molybdate(in) + ADP + phosphate + H(+). Functionally, part of the ABC transporter complex ModABC involved in molybdenum import. Responsible for energy coupling to the transport system. The protein is Molybdenum import ATP-binding protein ModC of Pseudomonas fluorescens (strain ATCC BAA-477 / NRRL B-23932 / Pf-5).